The sequence spans 349 residues: MNPYVLTILLSSLGLGTVLTFASSHWLLAWMGLEINTLAIIPIMAQQHHPRAIEATTKYFLTQATAAAMILFASTTNAWLVGEWEIHQLSHPLATTTVMLALALKLGLAPVHFWLPEVLQGLELTTGLILSTWQKLAPFALMIQVAPTINSSLLVTIGLLSTLVGGWGGLNQTQLRKILAYLPIAHLGWMVLILQFAPSLTLLSLSLYIVMTSSAFLTLKTNNSLTINTLATSWTKSPTLAALTALVLLSLGGLPPLSGFMPKWLILQELTKQGLPLSATLAAMTALLSLYFYLRLCYALTLTIYPNTLTATAPWRLNFTMITLPLSITTIMALGLLPLTPAVTAMLAL.

Transmembrane regions (helical) follow at residues 3-23 (PYVL…TFAS), 66-86 (AAAM…EWEI), 98-118 (VMLA…LPEV), 139-159 (FALM…TIGL), 178-198 (ILAY…QFAP), 199-219 (SLTL…FLTL), 240-260 (LAAL…LSGF), 274-294 (GLPL…YFYL), and 319-339 (FTMI…LLPL).

This sequence belongs to the complex I subunit 2 family.

It is found in the mitochondrion inner membrane. It catalyses the reaction a ubiquinone + NADH + 5 H(+)(in) = a ubiquinol + NAD(+) + 4 H(+)(out). Functionally, core subunit of the mitochondrial membrane respiratory chain NADH dehydrogenase (Complex I) that is believed to belong to the minimal assembly required for catalysis. Complex I functions in the transfer of electrons from NADH to the respiratory chain. The immediate electron acceptor for the enzyme is believed to be ubiquinone. This chain is NADH-ubiquinone oxidoreductase chain 2 (MT-ND2), found in Oncorhynchus mykiss (Rainbow trout).